The following is a 498-amino-acid chain: Phosphonates import ATP-binding protein PhnC (498 aa).

Positions 1–27 (MPQRPEAARAGPVAGPDAASKPAPGPA) are disordered. The region spanning 28–269 (LTLRGAGRAY…DLGELYEARR (242 aa)) is the ABC transporter domain. 60 to 67 (GPSGAGKS) lines the ATP pocket. The tract at residues 270–498 (GAADPARAPA…LEVARAEVPP (229 aa)) is lysR substrate binding domain.

Belongs to the ABC transporter superfamily. Phosphonates importer (TC 3.A.1.9.1) family. In terms of assembly, the complex is composed of two ATP-binding proteins (PhnC), two transmembrane proteins (PhnE) and a solute-binding protein (PhnD).

The protein localises to the cell inner membrane. The enzyme catalyses phosphonate(out) + ATP + H2O = phosphonate(in) + ADP + phosphate + H(+). Part of the ABC transporter complex PhnCDE involved in phosphonates import. Responsible for energy coupling to the transport system. The polypeptide is Phosphonates import ATP-binding protein PhnC (Anaeromyxobacter dehalogenans (strain 2CP-C)).